Here is a 74-residue protein sequence, read N- to C-terminus: UPF0435 protein GTNG_0390 (74 aa).

It belongs to the UPF0435 family.

The chain is UPF0435 protein GTNG_0390 from Geobacillus thermodenitrificans (strain NG80-2).